Consider the following 328-residue polypeptide: AA9 family lytic polysaccharide monooxygenase A (328 aa).

Residues 1 to 21 (MPSTKVAALSAVLALASTVAG) form the signal peptide. Histidine 22 contributes to the Cu(2+) binding site. Histidine 22 is modified (methylhistidine). 2 cysteine pairs are disulfide-bonded: cysteine 77/cysteine 199 and cysteine 118/cysteine 122. N-linked (GlcNAc...) asparagine glycosylation is present at asparagine 80. Position 107 (histidine 107) interacts with Cu(2+). N-linked (GlcNAc...) asparagine glycosylation is found at asparagine 121 and asparagine 159. Histidine 185 and glutamine 194 together coordinate O2. Tyrosine 196 provides a ligand contact to Cu(2+). O-linked (Man...) serine glycans are attached at residues serine 235 and serine 237. 2 O-linked (Man...) threonine glycosylation sites follow: threonine 238 and threonine 245.

This sequence belongs to the polysaccharide monooxygenase AA9 family. Cu(2+) serves as cofactor. The catalytically essential N-terminal histidine His-22 is post-translationally modified by methylation to prevent protonation of the histidine side chain, and protect the critical active site of the enzyme from oxidative damage.

The protein localises to the secreted. It catalyses the reaction [(1-&gt;4)-beta-D-glucosyl]n+m + reduced acceptor + O2 = 4-dehydro-beta-D-glucosyl-[(1-&gt;4)-beta-D-glucosyl]n-1 + [(1-&gt;4)-beta-D-glucosyl]m + acceptor + H2O.. Functionally, lytic polysaccharide monooxygenase (LPMO) that depolymerizes crystalline and amorphous polysaccharides via the oxidation of scissile alpha- or beta-(1-4)-glycosidic bonds, yielding C1 and C4 oxidation products. Catalysis by LPMOs requires the reduction of the active-site copper from Cu(II) to Cu(I) by a reducing agent and H(2)O(2) or O(2) as a cosubstrate. Shows activity on cellulosic substrates (Avicel, carboxymethylcellulose) and xylan. The chain is AA9 family lytic polysaccharide monooxygenase A from Talaromyces verruculosus (Penicillium verruculosum).